The following is a 358-amino-acid chain: Trans-enoyl reductase pvhC (358 aa).

48–51 (VDSK) provides a ligand contact to NADP(+). Residue 134 to 141 (ISFLTSGL) coordinates substrate. Residues 169–172 (SSSC), 192–195 (SPHN), Y210, and 257–258 (LE) contribute to the NADP(+) site. Residue 278–282 (GPSLL) participates in substrate binding. Residue 347–348 (VS) participates in NADP(+) binding.

It belongs to the zinc-containing alcohol dehydrogenase family. As to quaternary structure, monomer.

Its pathway is secondary metabolite biosynthesis. Its function is as follows. Trans-enoyl reductase; part of the gene cluster that mediates the biosynthesis of varicidin A, an antifungal natural product containing a cis-octahydrodecalin core. The PKS module of pvhA together with the enoylreductase pvhC catalyze the formation of the polyketide unit which is then conjugated to L-isoleucine by the condensation domain of the NRPS module. Activity of the Dieckmann cyclase domain (RED) of pvhA results in release of an acyclic tetramate. The cytochrome P450 monooxygenase pvhE then catalyzes the oxidation of the C21 methyl group to a to carboxylate group. The methyltransferase pvhD then further methylates the pvhE product. The Diels-Alderase pvhB is able to catalyze Diels-Alder cycloaddition using both pvhE and pvhD products as substrates to form the decalin ring, yielding varicidin B and A, respectively. The sequence is that of Trans-enoyl reductase pvhC from Talaromyces variabilis (Penicillium variabile).